Reading from the N-terminus, the 203-residue chain is Outer-membrane lipoprotein LolB (203 aa).

Positions Met1 to Gly18 are cleaved as a signal peptide. Cys19 carries N-palmitoyl cysteine lipidation. The S-diacylglycerol cysteine moiety is linked to residue Cys19.

It belongs to the LolB family. In terms of assembly, monomer.

It is found in the cell outer membrane. Functionally, plays a critical role in the incorporation of lipoproteins in the outer membrane after they are released by the LolA protein. In Cellvibrio japonicus (strain Ueda107) (Pseudomonas fluorescens subsp. cellulosa), this protein is Outer-membrane lipoprotein LolB.